A 735-amino-acid polypeptide reads, in one-letter code: Translation initiation factor IF-2 (735 aa).

2 stretches are compositionally biased toward basic and acidic residues: residues 52–66 (VNSEKKAEKKTEKPK) and 101–117 (KGKETKKTEAQQQEKKL). The interval 52-154 (VNSEKKAEKK…PAKKEKELPK (103 aa)) is disordered. Over residues 121-133 (AKKKGKGPMKGKK) the composition is skewed to basic residues. Positions 134-145 (QAAPASKQAQQP) are enriched in low complexity. Residues 236–405 (ERPPVVTIMG…LLVSEMEELK (170 aa)) form the tr-type G domain. A G1 region spans residues 245–252 (GHVDHGKT). Residue 245–252 (GHVDHGKT) coordinates GTP. Positions 270 to 274 (GITQH) are G2. The interval 291–294 (DTPG) is G3. Residues 291–295 (DTPGH) and 345–348 (NKMD) each bind GTP. A G4 region spans residues 345 to 348 (NKMD). The segment at 381–383 (SAK) is G5.

It belongs to the TRAFAC class translation factor GTPase superfamily. Classic translation factor GTPase family. IF-2 subfamily.

The protein resides in the cytoplasm. One of the essential components for the initiation of protein synthesis. Protects formylmethionyl-tRNA from spontaneous hydrolysis and promotes its binding to the 30S ribosomal subunits. Also involved in the hydrolysis of GTP during the formation of the 70S ribosomal complex. This chain is Translation initiation factor IF-2, found in Geobacillus thermodenitrificans (strain NG80-2).